Consider the following 756-residue polypeptide: Centromere protein I (756 aa).

A disordered region spans residues 1–60; it reads MSPQKRVKNVQAQNRTSQGSSSFQTTLSAWKVKQDPSNSKNISKHGQNNPVGDYEHADDQ. 2 stretches are compositionally biased toward polar residues: residues 10–28 and 35–50; these read VQAQNRTSQGSSSFQTTLS and DPSNSKNISKHGQNNP.

The protein belongs to the CENP-I/CTF3 family. Component of the CENPA-CAD complex, composed of CENPI, CENPK, CENPL, CENPO, CENPP, CENPQ, CENPR and CENPS. The CENPA-CAD complex interacts with the CENPA-NAC complex, at least composed of CENPA, CENPC, CENPH, CENPM, CENPN, CENPT and CENPU. Interacts with SENP6. Sumoylated. Sumoylated form can be polyubiquitinated by RNF4, leading to its degradation. Desumoylation by SENP6 prevents its degradation.

The protein localises to the nucleus. The protein resides in the chromosome. It is found in the centromere. In terms of biological role, component of the CENPA-CAD (nucleosome distal) complex, a complex recruited to centromeres which is involved in assembly of kinetochore proteins, mitotic progression and chromosome segregation. May be involved in incorporation of newly synthesized CENPA into centromeres via its interaction with the CENPA-NAC complex. Required for the localization of CENPF, MAD1L1 and MAD2 (MAD2L1 or MAD2L2) to kinetochores. Involved in the response of gonadal tissues to follicle-stimulating hormone. In Homo sapiens (Human), this protein is Centromere protein I (CENPI).